A 1850-amino-acid chain; its full sequence is Serine/threonine-protein kinase WNK (1850 aa).

Disordered stretches follow at residues 1 to 108 (MPDS…NALE), 221 to 253 (QHSI…NNDK), and 272 to 309 (MVND…EKAA). 2 stretches are compositionally biased toward low complexity: residues 16-26 (SSVSSTTASTT) and 234-251 (PPNT…AANN). Positions 284–309 (DMDKMVSEEERARKEQEKREEEEKAA) are enriched in basic and acidic residues. In terms of domain architecture, Protein kinase spans 334–596 (LKFDEELGRG…VKQLLVDDFF (263 aa)). ATP-binding positions include Ser344, 416-419 (TELM), and Lys466. Residue Asp483 is the Proton acceptor of the active site. The stretch at 693-749 (DHRLLEIKRAKEEEERIREEAEIKEELRLRAEAKEKEKERLEKERLEKKAAAAAAAN) forms a coiled coil. The span at 727–742 (EKEKERLEKERLEKKA) shows a compositional bias: basic and acidic residues. 7 disordered regions span residues 727-790 (EKEK…AQQP), 890-943 (TPAS…KRKS), 1040-1130 (EPPT…AAKP), 1188-1249 (SPVS…TPAI), 1588-1636 (GTHI…PSHS), 1721-1740 (ASLS…DNEG), and 1769-1850 (IIPS…IENV). A compositionally biased stretch (pro residues) spans 751 to 760 (NPTPIPPTPA). Polar residues predominate over residues 776–790 (STQTSAEIQQSAQQP). A compositionally biased stretch (low complexity) spans 890–934 (TPASIASPSPAPSATDVASTTAPVTPAPTPTTTTDGGAAAASTTT). Over residues 1062–1071 (PKIEIEKTPP) the composition is skewed to basic and acidic residues. Residues 1077-1101 (QEPNNVQVTNVRKVSQESNAESVQS) show a composition bias toward polar residues. Positions 1188–1207 (SPVSHSLSSNSSPSATTHSN) are enriched in low complexity. Positions 1208–1217 (MSSIQSTTSV) are enriched in polar residues. Positions 1771-1805 (PSSRQSVRSATSSSPSTPPSSSSAPPKSLSSPTKS) are enriched in low complexity. The span at 1806–1820 (YVSHCSLSIGYGSTA) shows a compositional bias: polar residues. Residues 1821–1832 (SSEQQQREPSPS) show a composition bias toward low complexity.

It belongs to the protein kinase superfamily. Ser/Thr protein kinase family. WNK subfamily. Interacts with gck-3 (via C-terminus). Mg(2+) serves as cofactor. In terms of tissue distribution, expressed in pharynx, nervous system, hypodermis, spermatheca, excretory cell and canal and body wall muscles.

Its subcellular location is the cytoplasm. It carries out the reaction L-seryl-[protein] + ATP = O-phospho-L-seryl-[protein] + ADP + H(+). The catalysed reaction is L-threonyl-[protein] + ATP = O-phospho-L-threonyl-[protein] + ADP + H(+). Activated in response to hyperosmotic stress: cell shrinkage promotes formation of a membraneless compartment that concentrates wnk-1 with its downstrem substrates. In terms of biological role, serine/threonine-protein kinase component of the WNK3-SPAK/OSR1 kinase cascade, which plays an important role in the regulation of electrolyte homeostasis and regulatory volume increase in response to hyperosmotic stress. Wnk-1 mediates regulatory volume increase in response to hyperosmotic stress by acting as a molecular crowding sensor, which senses cell shrinkage and mediates formation of a membraneless compartment by undergoing liquid-liquid phase separation. The membraneless compartment concentrates wnk-1 with its substrates. Phosphorylates gck-3. Plays a role in osmotic stress responses during which it increases gpdh-1 translation, likely by phosphorylating gck-3. Essential for larval development and the tubular formation of the excretory canals. This is Serine/threonine-protein kinase WNK from Caenorhabditis elegans.